The sequence spans 130 residues: Small ribosomal subunit protein uS11 (130 aa).

The protein belongs to the universal ribosomal protein uS11 family. As to quaternary structure, part of the 30S ribosomal subunit. Interacts with proteins S7 and S18. Binds to IF-3.

Its function is as follows. Located on the platform of the 30S subunit, it bridges several disparate RNA helices of the 16S rRNA. Forms part of the Shine-Dalgarno cleft in the 70S ribosome. This chain is Small ribosomal subunit protein uS11, found in Syntrophobacter fumaroxidans (strain DSM 10017 / MPOB).